The primary structure comprises 155 residues: Ribosomal RNA large subunit methyltransferase H (155 aa).

S-adenosyl-L-methionine is bound by residues Leu-72, Gly-103, and 122 to 127 (LSDLTL).

Belongs to the RNA methyltransferase RlmH family. In terms of assembly, homodimer.

The protein localises to the cytoplasm. It carries out the reaction pseudouridine(1915) in 23S rRNA + S-adenosyl-L-methionine = N(3)-methylpseudouridine(1915) in 23S rRNA + S-adenosyl-L-homocysteine + H(+). Its function is as follows. Specifically methylates the pseudouridine at position 1915 (m3Psi1915) in 23S rRNA. In Acidovorax ebreus (strain TPSY) (Diaphorobacter sp. (strain TPSY)), this protein is Ribosomal RNA large subunit methyltransferase H.